Consider the following 213-residue polypeptide: Pyrrolidone-carboxylate peptidase (213 aa).

Active-site residues include Glu-78, Cys-141, and His-165.

The protein belongs to the peptidase C15 family. In terms of assembly, homotetramer.

Its subcellular location is the cytoplasm. The catalysed reaction is Release of an N-terminal pyroglutamyl group from a polypeptide, the second amino acid generally not being Pro.. Functionally, removes 5-oxoproline from various penultimate amino acid residues except L-proline. The chain is Pyrrolidone-carboxylate peptidase from Alkaliphilus oremlandii (strain OhILAs) (Clostridium oremlandii (strain OhILAs)).